Reading from the N-terminus, the 288-residue chain is Octanoyl-[GcvH]:protein N-octanoyltransferase (288 aa).

A BPL/LPL catalytic domain is found at 44–253; it reads AGGPPTFRLW…VLESAMGPQV (210 aa). The active-site Acyl-thioester intermediate is C148. Residues 269 to 288 are disordered; it reads GREGASETDPRRVAYGVDRP. The span at 272 to 288 shows a compositional bias: basic and acidic residues; sequence GASETDPRRVAYGVDRP.

Belongs to the octanoyltransferase LipL family.

The enzyme catalyses N(6)-octanoyl-L-lysyl-[glycine-cleavage complex H protein] + L-lysyl-[lipoyl-carrier protein] = N(6)-octanoyl-L-lysyl-[lipoyl-carrier protein] + L-lysyl-[glycine-cleavage complex H protein]. Its pathway is protein modification; protein lipoylation via endogenous pathway; protein N(6)-(lipoyl)lysine from octanoyl-[acyl-carrier-protein]. Catalyzes the amidotransfer (transamidation) of the octanoyl moiety from octanoyl-GcvH to the lipoyl domain of the E2 subunit of lipoate-dependent enzymes. This chain is Octanoyl-[GcvH]:protein N-octanoyltransferase, found in Kyrpidia tusciae (strain DSM 2912 / NBRC 15312 / T2) (Bacillus tusciae).